The sequence spans 530 residues: Phosphoenolpyruvate carboxykinase (ATP) (530 aa).

Substrate is bound by residues R59, Y198, and K204. Residues K204, H223, and 239–247 (GLSGTGKTT) contribute to the ATP site. The Mn(2+) site is built by K204 and H223. Residue D260 participates in Mn(2+) binding. Residues E288, R325, 440 to 441 (RI), and T446 each bind ATP. R325 is a binding site for substrate.

It belongs to the phosphoenolpyruvate carboxykinase (ATP) family. Requires Mn(2+) as cofactor.

Its subcellular location is the cytoplasm. It catalyses the reaction oxaloacetate + ATP = phosphoenolpyruvate + ADP + CO2. Its pathway is carbohydrate biosynthesis; gluconeogenesis. Functionally, involved in the gluconeogenesis. Catalyzes the conversion of oxaloacetate (OAA) to phosphoenolpyruvate (PEP) through direct phosphoryl transfer between the nucleoside triphosphate and OAA. This Azobacteroides pseudotrichonymphae genomovar. CFP2 protein is Phosphoenolpyruvate carboxykinase (ATP).